The primary structure comprises 348 residues: Protein RecA (348 aa).

65 to 72 (GPESSGKT) provides a ligand contact to ATP.

The protein belongs to the RecA family.

It localises to the cytoplasm. In terms of biological role, can catalyze the hydrolysis of ATP in the presence of single-stranded DNA, the ATP-dependent uptake of single-stranded DNA by duplex DNA, and the ATP-dependent hybridization of homologous single-stranded DNAs. It interacts with LexA causing its activation and leading to its autocatalytic cleavage. This is Protein RecA from Vibrio natriegens.